The following is a 293-amino-acid chain: 4-diphosphocytidyl-2-C-methyl-D-erythritol kinase (293 aa).

Residue lysine 16 is part of the active site. 99–109 is an ATP binding site; the sequence is PMGAGLGGGSS. Aspartate 141 is an active-site residue.

The protein belongs to the GHMP kinase family. IspE subfamily.

It catalyses the reaction 4-CDP-2-C-methyl-D-erythritol + ATP = 4-CDP-2-C-methyl-D-erythritol 2-phosphate + ADP + H(+). Its pathway is isoprenoid biosynthesis; isopentenyl diphosphate biosynthesis via DXP pathway; isopentenyl diphosphate from 1-deoxy-D-xylulose 5-phosphate: step 3/6. Its function is as follows. Catalyzes the phosphorylation of the position 2 hydroxy group of 4-diphosphocytidyl-2C-methyl-D-erythritol. This chain is 4-diphosphocytidyl-2-C-methyl-D-erythritol kinase, found in Burkholderia multivorans (strain ATCC 17616 / 249).